The chain runs to 356 residues: Protein RecA (356 aa).

Residue 68–75 (GQESSGKT) participates in ATP binding.

This sequence belongs to the RecA family.

It localises to the cytoplasm. In terms of biological role, can catalyze the hydrolysis of ATP in the presence of single-stranded DNA, the ATP-dependent uptake of single-stranded DNA by duplex DNA, and the ATP-dependent hybridization of homologous single-stranded DNAs. It interacts with LexA causing its activation and leading to its autocatalytic cleavage. In Thermotoga sp. (strain RQ2), this protein is Protein RecA.